A 3011-amino-acid polypeptide reads, in one-letter code: Genome polyprotein (3011 aa).

Position 2 is an N-acetylserine; by host (Ser-2). The interval 2-23 (STIPKPQRKTKRNTNRRPQDVK) is interaction with STAT1. The tract at residues 2-58 (STIPKPQRKTKRNTNRRPQDVKFPGGGQIVGGVYLLPRRGPRLGVRATRKTSERSQP) is interaction with EIF2AK2/PKR. Residues 2–59 (STIPKPQRKTKRNTNRRPQDVKFPGGGQIVGGVYLLPRRGPRLGVRATRKTSERSQPR) form an interaction with DDX3X region. Positions 2 to 75 (STIPKPQRKT…PKVRRPEGRT (74 aa)) are disordered. At 2-168 (STIPKPQRKT…EDGVNYATGN (167 aa)) the chain is on the cytoplasmic side. 2 short sequence motifs (nuclear localization signal) span residues 5-13 (PKPQRKTKR) and 38-43 (PRRGPR). Residues 7–16 (PQRKTKRNTN) are compositionally biased toward basic residues. Over residues 32-47 (GGVYLLPRRGPRLGVR) the composition is skewed to low complexity. Position 53 is a phosphoserine; by host (Ser-53). Short sequence motifs (nuclear localization signal) lie at residues 58 to 64 (PRGRRQP) and 66 to 71 (PKVRRP). Over residues 58-68 (PRGRRQPIPKV) the composition is skewed to basic residues. Phosphoserine; by host is present on Ser-99. The interval 112–152 (PRRRSRNLGKVIDTLTCGFADLMGYIPLVGAPLGGAARALA) is important for endoplasmic reticulum and mitochondrial localization. Position 116 is a phosphoserine; by host PKA (Ser-116). Residues 122 to 173 (VIDTLTCGFADLMGYIPLVGAPLGGAARALAHGVRVLEDGVNYATGNLPGCS) are interaction with APOA2. The important for lipid droplets localization stretch occupies residues 164–167 (YATG). Residues 169–189 (LPGCSFSIFLLALLSCLTVPA) form a helical membrane-spanning segment. Positions 178 to 191 (LLALLSCLTVPASA) are cleaved as a propeptide — ER anchor for the core protein, removed in mature form by host signal peptidase. Over 190 to 358 (SAYQVRNSTG…AGAHWGVLAG (169 aa)) the chain is Lumenal. Residues Asn-196, Asn-209, and Asn-234 are each glycosylated (N-linked (GlcNAc...) asparagine; by host). The important for fusion stretch occupies residues 265–296 (LVGSATLCSALYVGDLCGSVFLIGQLFTFSPR). Residue Asn-305 is glycosylated (N-linked (GlcNAc...) asparagine; by host). Residues 359-379 (IAYFSMVGNWAKVLVVLLLFA) form a helical membrane-spanning segment. The Lumenal segment spans residues 380–725 (GVDAETIVSG…WEYVVLLFLL (346 aa)). Residues 385–411 (TIVSGGQAARAMSGLVSLFTPGAKQNI) are HVR1. N-linked (GlcNAc...) (high mannose) asparagine; by host glycosylation is found at Asn-417, Asn-423, Asn-430, and Asn-448. Cystine bridges form between Cys-429–Cys-552, Cys-452–Cys-459, Cys-486–Cys-494, and Cys-503–Cys-508. Positions 474 to 479 (HANGSG) are HVR2. Residues 480 to 493 (PDQRPYCWHYPPKP) are CD81-binding 1. Asn-532 carries N-linked (GlcNAc...) (high mannose) asparagine; by host glycosylation. N-linked (GlcNAc...) asparagine; by host glycosylation occurs at Asn-540. Positions 544-551 (PPLGNWFG) are CD81-binding 2. N-linked (GlcNAc...) (high mannose) asparagine; by host glycosylation is present at Asn-556. Residues Cys-564 and Cys-569 are joined by a disulfide bond. A glycan (N-linked (GlcNAc...) (high mannose) asparagine; by host) is linked at Asn-576. 3 cysteine pairs are disulfide-bonded: Cys-581–Cys-585, Cys-597–Cys-620, and Cys-607–Cys-644. 2 N-linked (GlcNAc...) (high mannose) asparagine; by host glycosylation sites follow: Asn-623 and Asn-645. An intrachain disulfide couples Cys-652 to Cys-677. The tract at residues 660–671 (SELSPLLLSTTQ) is PKR/eIF2-alpha phosphorylation homology domain (PePHD). The chain crosses the membrane as a helical span at residues 726 to 746 (LADARVCSCLWMMLLISQAEA). The Lumenal portion of the chain corresponds to 747-757 (ALENLVILNAA). A helical membrane pass occupies residues 758-778 (SLAGTRGLVSFLVFFCFAWYL). Topologically, residues 779 to 781 (KGR) are cytoplasmic. Residues 782-803 (WVPGAAYALYGMWPLLLLLLAL) traverse the membrane as a helical segment. Residues 804–813 (PQRAYALDTE) are Lumenal-facing. Residues 814–834 (VAASCGGVVLVGLMALTLSPY) form a helical membrane-spanning segment. Residues 835–838 (YKRC) are Cytoplasmic-facing. A helical transmembrane segment spans residues 839–859 (ISWCLWWLQYFLTRVEAQLHV). Over 860-881 (WVPPLNVRGGRDAVILLMCVVH) the chain is Lumenal. The helical transmembrane segment at 882–902 (PTLVFDITKLLLAVLGPLWIL) threads the bilayer. Residues 903–1026 (QASLLKVPYF…GMVSKGWRLL (124 aa)) form the Peptidase C18 domain. Topologically, residues 903–1657 (QASLLKVPYF…CMSADLEVVT (755 aa)) are cytoplasmic. Residues 904 to 1206 (ASLLKVPYFV…PVESLETTMR (303 aa)) are protease NS2-3. Cys-922 is lipidated: S-palmitoyl cysteine; by host. The interaction with host SCPS1 stretch occupies residues 929–949 (VGGHYVQMAIIKLGALTGTYV). Active-site for protease NS2 activity; shared with dimeric partner residues include His-952, Glu-972, and Cys-993. The 182-residue stretch at 1027–1208 (APITAYAQQT…ESLETTMRSP (182 aa)) folds into the Peptidase S29 domain. Residues His-1083 and Asp-1107 each act as charge relay system; for serine protease NS3 activity in the active site. 2 residues coordinate Zn(2+): Cys-1123 and Cys-1125. Ser-1165 serves as the catalytic Charge relay system; for serine protease NS3 activity. 2 residues coordinate Zn(2+): Cys-1171 and His-1175. Residues 1217 to 1369 (PAVPQSFQVA…ANIEEVALST (153 aa)) form the Helicase ATP-binding domain. An ATP-binding site is contributed by 1230-1237 (APTGSGKS). Positions 1237 and 1317 each coordinate Mg(2+). Residues 1316-1319 (DECH) carry the DECH box motif. An RNA-binding region spans residues 1486–1497 (QRRGRTGRGKPG). The helical transmembrane segment at 1658-1678 (STWVLVGGVLAALAAYCLSTG) threads the bilayer. The interval 1679-1690 (CVVIVGRIVLSG) is NS3-binding. At 1679 to 1805 (CVVIVGRIVL…AVTSPLTTSQ (127 aa)) the chain is on the cytoplasmic side. The helical transmembrane segment at 1806–1824 (TLLFNILGGWVAAQLAAPG) threads the bilayer. The Lumenal segment spans residues 1825–1828 (AATA). The chain crosses the membrane as a helical span at residues 1829–1849 (FVGSGLAGAAVGSVGLGRVLV). Position 1850 (Asp-1850) is a topological domain, cytoplasmic. Residues 1851-1871 (ILAGYGAGVAGALVAFKIMSG) form a helical membrane-spanning segment. The Lumenal portion of the chain corresponds to 1872 to 1881 (ELPSTEDLVN). The chain crosses the membrane as a helical span at residues 1882–1902 (LLPAILSPGALVVGVVCAAIL). The Cytoplasmic portion of the chain corresponds to 1903-1972 (RRHVGPGEGA…WLSSESTTPC (70 aa)). A lipid anchor (S-palmitoyl cysteine; by host) is attached at Cys-1972. The stretch at 1973–2002 (SGSWLRDIWDWICEVLSDFKTWLKTKLMPH) is an intramembrane region. Residues 2003–2990 (LPGIPFVSCQ…YHSVSHARPR (988 aa)) are Cytoplasmic-facing. Residues Cys-2011, Cys-2029, Cys-2031, and Cys-2052 each contribute to the Zn(2+) site. The interval 2120–2208 (EFFTELDGVR…ASSSASQLSA (89 aa)) is FKBP8-binding. A transcriptional activation region spans residues 2120-2332 (EFFTELDGVR…PVPPPRKKRT (213 aa)). The tract at residues 2135 to 2139 (PPCKP) is interaction with non-structural protein 4A. The disordered stretch occupies residues 2187–2207 (GRRLARGSPPSEASSSASQLS). Residues 2189 to 2441 (RLARGSPPSE…TPCAAEEQKL (253 aa)) are interaction with host SKP2. Ser-2194 carries the phosphoserine; by host; in p56 modification. Phosphoserine; by host; in p58 occurs at positions 2197, 2201, 2204, 2207, and 2210. An ISDR region spans residues 2210–2249 (SLKATCTINHDSPDAELIEANLLWRQEMGGNITRVESENK). Residues 2210 to 2275 (SLKATCTINH…REISVPAEIL (66 aa)) form an interaction with EIF2AK2/PKR region. Positions 2249-2306 (KVVILDSFDPLVAEEDEREISVPAEILRKSRRFTQALPIWARPDYNPPLIETWKKPNY) are NS4B-binding. A disordered region spans residues 2312 to 2334 (HGCPLPPPQSPPVPPPRKKRTVV). Residues 2315–2326 (PLPPPQSPPVPP) show a composition bias toward pro residues. Residues 2322–2325 (PPVP) carry the SH3-binding motif. The short motif at 2326-2334 (PPRKKRTVV) is the Nuclear localization signal element. A Glycyl lysine isopeptide (Lys-Gly) (interchain with G-Cter in ubiquitin) cross-link involves residue Lys-2350. The segment covering 2351-2369 (SFGSSSTSGITGDNTTTSS) has biased composition (low complexity). The disordered stretch occupies residues 2351–2408 (SFGSSSTSGITGDNTTTSSEPAPSGCSPDSDAESYSSMPPLEGEPGDPDLSDGSWSTV). Residues 2354 to 2377 (SSSTSGITGDNTTTSSEPAPSGCS) form a V3 region. 2 positions are modified to phosphoserine; by host: Ser-2449 and Ser-2462. A RdRp catalytic domain is found at 2634-2752 (PMGFSYDTRC…ICESAGVQED (119 aa)). Positions 2640, 2738, and 2739 each coordinate Mg(2+). The chain crosses the membrane as a helical span at residues 2991–3011 (WFWFCLLLLAAGVGIYLLPNR).

It belongs to the hepacivirus polyprotein family. Homooligomer. Interacts with E1 (via C-terminus). Interacts with the non-structural protein 5A. Interacts (via N-terminus) with host STAT1 (via SH2 domain); this interaction results in decreased STAT1 phosphorylation and ubiquitin-mediated proteasome-dependent STAT1 degradation, leading to decreased IFN-stimulated gene transcription. Interacts with host STAT3; this interaction constitutively activates STAT3. Interacts with host LTBR receptor. Interacts with host TNFRSF1A receptor and possibly induces apoptosis. Interacts with host HNRPK. Interacts with host YWHAE. Interacts with host UBE3A/E6AP. Interacts with host DDX3X. Interacts with host APOA2. Interacts with host RXRA protein. Interacts with host SP110 isoform 3/Sp110b; this interaction sequesters the transcriptional corepressor SP110 away from the nucleus. Interacts with host CREB3 nuclear transcription protein; this interaction triggers cell transformation. Interacts with host ACY3. Interacts with host C1QR1. Interacts with host RBM24; this interaction, which enhances the interaction of the mature core protein with 5'-UTR, may inhibit viral translation and favor replication. Interacts with host EIF2AK2/PKR; this interaction induces the autophosphorylation of EIF2AK2. Part of the viral assembly initiation complex composed of NS2, E1, E2, NS3, NS4A, NS5A and the mature core protein. As to quaternary structure, forms a heterodimer with envelope glycoprotein E2. Interacts with mature core protein. Interacts with protease NS2. The heterodimer E1/E2 interacts with host CLDN1; this interaction plays a role in viral entry into host cell. Interacts with host SPSB2 (via C-terminus). Part of the viral assembly initiation complex composed of NS2, E1, E2, NS3, NS4A, NS5A and the mature core protein. Interacts with host NEURL3; this interaction prevents E1 binding to glycoprotein E2. In terms of assembly, forms a heterodimer with envelope glycoprotein E1. Interacts with host CD81 and SCARB1 receptors; these interactions play a role in viral entry into host cell. Interacts with host EIF2AK2/PKR; this interaction inhibits EIF2AK2 and probably allows the virus to evade the innate immune response. Interacts with host CD209/DC-SIGN and CLEC4M/DC-SIGNR. Interact with host SPCS1; this interaction is essential for viral particle assembly. Interacts with protease NS2. The heterodimer E1/E2 interacts with host CLDN1; this interaction plays a role in viral entry into host cell. Part of the viral assembly initiation complex composed of NS2, E1, E2, NS3, NS4A, NS5A and the mature core protein. Interacts with host SLC3A2/4F2hc; the interaction may facilitate viral entry into host cell. Interacts with human PLSCR1. Homohexamer. Homoheptamer. Interacts with protease NS2. As to quaternary structure, homodimer. Interacts with host SPCS1; this interaction is essential for viral particle assembly. Interacts with envelope glycoprotein E1. Interacts with envelope glycoprotein E2. Interacts with viroporin p7. Interacts with serine protease/helicase NS3. Part of the replication complex composed of NS2, NS3, NS4A, NS4B, NS5A and the RNA-directed RNA polymerase embedded in an ER-derived membranous web. Part of the viral assembly initiation complex composed of NS2, E1, E2, NS3, NS4A, NS5A and the mature core protein. In terms of assembly, interacts with protease NS2. Interacts with non-structural protein 4A; this interaction stabilizes the folding of NS3 serine protease. NS3-NS4A interaction is essential for NS3 activation and allows membrane anchorage of the latter. NS3/NS4A complex also prevents phosphorylation of host IRF3, thus preventing the establishment of dsRNA induced antiviral state. Interacts with host MAVS; this interaction leads to the cleavage and inhibition of host MAVS. Interacts with host TICAM1; this interaction leads to the cleavage and inhibition of host TICAM1. Interacts with host TANK-binding kinase/TBK1; this interaction results in the inhibition of the association between TBK1 and IRF3, which leads to the inhibition of IRF3 activation. Interacts with host RBM24. Part of the replication complex composed of NS2, NS3, NS4A, NS4B, NS5A and the RNA-directed RNA polymerase embedded in an ER-derived membranous web. Part of the viral assembly initiation complex composed of NS2, E1, E2, NS3, NS4A, NS5A and the mature core protein. Interacts with NS3 serine protease; this interaction stabilizes the folding of NS3 serine protease. NS3-NS4A interaction is essential for NS3 activation and allows membrane anchorage of the latter. Interacts with non-structural protein 5A (via N-terminus). Part of the replication complex composed of NS2, NS3, NS4A, NS4B, NS5A and the RNA-directed RNA polymerase embedded in an ER-derived membranous web. Part of the viral assembly initiation complex composed of NS2, E1, E2, NS3, NS4A, NS5A and the mature core protein. As to quaternary structure, homomultimer. Interacts with non-structural protein NS5A. Interacts with host PLA2G4C; this interaction likely initiates the recruitment of replication complexes to lipid droplets. Interacts with host STING; this interaction disrupts the interaction between STING and TBK1 thereby suppressing the interferon signaling. Part of the replication complex composed of NS2, NS3, NS4A, NS4B, NS5A and the RNA-directed RNA polymerase embedded in an ER-derived membranous web. In terms of assembly, monomer. Homodimer; dimerization is required for RNA-binding. Interacts with the mature core protein. Interacts (via N-terminus) with non-structural protein 4A. Interacts with non-structural protein 4B. Interacts (via region D2) with RNA-directed RNA polymerase. Part of the viral assembly initiation complex composed of NS2, E1, E2, NS3, NS4A, NS5A and the mature core protein. Part of the replication complex composed of NS2, NS3, NS4A, NS4B, NS5A and the RNA-directed RNA polymerase embedded in an ER-derived membranous web. Interacts with host GRB2. Interacts with host BIN1. Interacts with host PIK3R1. Interacts with host SRCAP. Interacts with host FKBP8. Interacts (via C-terminus) with host VAPB (via MSP domain). Interacts with host EIF2AK2/PKR; this interaction leads to disruption of EIF2AK2 dimerization by NS5A and probably allows the virus to evade the innate immune response. Interacts (via N-terminus) with host PACSIN2 (via N-terminus); this interaction attenuates protein kinase C alpha-mediated phosphorylation of PACSIN2 by disrupting the interaction between PACSIN2 and PRKCA. Interacts (via N-terminus) with host SRC kinase (via SH2 domain). Interacts with most Src-family kinases. Interacts with host IFI27 and SKP2; promotes the ubiquitin-mediated proteasomal degradation of NS5A. Interacts with host GPS2. Interacts with host TNFRSF21; this interaction allows the modulation by the virus of JNK, p38 MAPK, STAT3, and Akt signaling pathways in a DR6-dependent manner. Interacts (via N-terminus) with host CIDEB (via N-terminus); this interaction seems to regulate the association of HCV particles with APOE. Interacts with host CHKA/Choline Kinase-alpha; CHKA bridges host PI4KA and NS5A and potentiates NS5A-stimulated PI4KA activity, which then facilitates the targeting of the ternary complex to the ER for viral replication. Interacts with host SPSB2 (via C-terminus); this interaction targets NS5A for ubiquitination and degradation. Interacts with host RAB18; this interaction may promote the association of NS5A and other replicase components with lipid droplets. Interacts (via region D2) with host PPIA/CYPA; the interaction stimulates RNA-binding ability of NS5A and is dependent on the peptidyl-prolyl cis-trans isomerase activity of PPIA/CYPA. Interacts with host TRIM14; this interaction induces the degradation of NS5A. Homooligomer. Interacts with non-structural protein 5A. Interacts with host VAPB. Interacts with host PRK2/PKN2. Interacts with host HNRNPA1 and SEPT6; these interactions facilitate viral replication. Part of the replication complex composed of NS2, NS3, NS4A, NS4B, NS5A and the RNA-directed RNA polymerase. It depends on Zn(2+) as a cofactor. Mg(2+) serves as cofactor. Post-translationally, specific enzymatic cleavages in vivo yield mature proteins. The structural proteins, core, E1, E2 and p7 are produced by proteolytic processing by host signal peptidases. The core protein precursor is synthesized as a 23 kDa, which is retained in the ER membrane through the hydrophobic signal peptide. Cleavage by the signal peptidase releases the 21 kDa mature core protein. The cleavage of the core protein precursor occurs between aminoacids 176 and 188 but the exact cleavage site is not known. Some degraded forms of the core protein appear as well during the course of infection. The other proteins (p7, NS2, NS3, NS4A, NS4B, NS5A and NS5B) are cleaved by the viral proteases. Autoprocessing between NS2 and NS3 is mediated by the NS2 cysteine protease catalytic domain and regulated by the NS3 N-terminal domain. In terms of processing, phosphorylated by host PKC and PKA. Ubiquitinated; mediated by UBE3A and leading to core protein subsequent proteasomal degradation. Post-translationally, highly N-glycosylated. In terms of processing, palmitoylation is required for NS2/3 autoprocessing and E2 recruitment to membranes. Palmitoylated. This modification may play a role in its polymerization or in protein-protein interactions. Post-translationally, phosphorylated on serines in a basal form termed p56. p58 is a hyperphosphorylated form of p56. p56 and p58 coexist in the cell in roughly equivalent amounts. Hyperphosphorylation is dependent on the presence of NS4A. Host CSNK1A1/CKI-alpha or RPS6KB1 kinases may be responsible for NS5A phosphorylation. In terms of processing, tyrosine phosphorylation is essential for the interaction with host SRC. The N-terminus is phosphorylated by host PRK2/PKN2.

It is found in the host endoplasmic reticulum membrane. It localises to the host mitochondrion membrane. The protein localises to the virion. Its subcellular location is the host cytoplasm. The protein resides in the host nucleus. It is found in the host lipid droplet. It localises to the virion membrane. The protein localises to the host mitochondrion. Its subcellular location is the host cell membrane. The protein resides in the host perinuclear region. The catalysed reaction is Hydrolysis of four peptide bonds in the viral precursor polyprotein, commonly with Asp or Glu in the P6 position, Cys or Thr in P1 and Ser or Ala in P1'.. The enzyme catalyses a ribonucleoside 5'-triphosphate + H2O = a ribonucleoside 5'-diphosphate + phosphate + H(+). It carries out the reaction ATP + H2O = ADP + phosphate + H(+). It catalyses the reaction RNA(n) + a ribonucleoside 5'-triphosphate = RNA(n+1) + diphosphate. Its activity is regulated as follows. Inhibited by the antiviral drug hexamethylene amiloride. Inhibition by amantadine appears to be genotype-dependent. Also inhibited by long-alkyl-chain iminosugar derivatives. With respect to regulation, activity is up-regulated by PRK2/PKN2-mediated phosphorylation. Packages viral RNA to form a viral nucleocapsid, and promotes virion budding. Participates in the viral particle production as a result of its interaction with the non-structural protein 5A. Binds RNA and may function as a RNA chaperone to induce the RNA structural rearrangements taking place during virus replication. Modulates viral translation initiation by interacting with viral IRES and 40S ribosomal subunit. Affects various cell signaling pathways, host immunity and lipid metabolism. Prevents the establishment of cellular antiviral state by blocking the interferon-alpha/beta (IFN-alpha/beta) and IFN-gamma signaling pathways and by blocking the formation of phosphorylated STAT1 and promoting ubiquitin-mediated proteasome-dependent degradation of STAT1. Activates STAT3 leading to cellular transformation. Regulates the activity of cellular genes, including c-myc and c-fos. May repress the promoter of p53, and sequester CREB3 and SP110 isoform 3/Sp110b in the cytoplasm. Represses cell cycle negative regulating factor CDKN1A, thereby interrupting an important check point of normal cell cycle regulation. Targets transcription factors involved in the regulation of inflammatory responses and in the immune response: suppresses TNF-induced NF-kappa-B activation, and activates AP-1. Binds to dendritic cells (DCs) via C1QR1, resulting in down-regulation of T-lymphocytes proliferation. Alters lipid metabolism by interacting with hepatocellular proteins involved in lipid accumulation and storage. Induces up-regulation of FAS promoter activity, and thereby contributes to the increased triglyceride accumulation in hepatocytes (steatosis). In terms of biological role, forms a heterodimer with envelope glycoprotein E2, which mediates virus attachment to the host cell, virion internalization through clathrin-dependent endocytosis and fusion with host membrane. Fusion with the host cell is most likely mediated by both E1 and E2, through conformational rearrangements of the heterodimer required for fusion rather than a classical class II fusion mechanism. E1/E2 heterodimer binds host apolipoproteins such as APOB and ApoE thereby forming a lipo-viro-particle (LVP). APOE associated to the LVP allows the initial virus attachment to cell surface receptors such as the heparan sulfate proteoglycans (HSPGs), syndecan-1 (SDC1), syndecan-1 (SDC2), the low-density lipoprotein receptor (LDLR) and scavenger receptor class B type I (SCARB1). The cholesterol transfer activity of SCARB1 allows E2 exposure and binding of E2 to SCARB1 and the tetraspanin CD81. E1/E2 heterodimer binding on CD81 activates the epithelial growth factor receptor (EGFR) signaling pathway. Diffusion of the complex E1-E2-EGFR-SCARB1-CD81 to the cell lateral membrane allows further interaction with Claudin 1 (CLDN1) and occludin (OCLN) to finally trigger HCV entry. Functionally, forms a heterodimer with envelope glycoprotein E1, which mediates virus attachment to the host cell, virion internalization through clathrin-dependent endocytosis and fusion with host membrane. Fusion with the host cell is most likely mediated by both E1 and E2, through conformational rearrangements of the heterodimer required for fusion rather than a classical class II fusion mechanism. The interaction between envelope glycoprotein E2 and host apolipoprotein E/APOE allows the proper assembly, maturation and infectivity of the viral particles. This interaction is probably promoted via the up-regulation of cellular autophagy by the virus. E1/E2 heterodimer binds host apolipoproteins such as APOB and APOE thereby forming a lipo-viro-particle (LVP). APOE associated to the LVP allows the initial virus attachment to cell surface receptors such as the heparan sulfate proteoglycans (HSPGs), syndecan-1 (SDC1), syndecan-1 (SDC2), the low-density lipoprotein receptor (LDLR) and scavenger receptor class B type I (SCARB1). The cholesterol transfer activity of SCARB1 allows E2 exposure and binding of E2 to SCARB1 and the tetraspanin CD81. E1/E2 heterodimer binding on CD81 activates the epithelial growth factor receptor (EGFR) signaling pathway. Diffusion of the complex E1-E2-EGFR-SCARB1-CD81 to the cell lateral membrane allows further interaction with Claudin 1 (CLDN1) and occludin (OCLN) to finally trigger HCV entry. Inhibits host EIF2AK2/PKR activation, preventing the establishment of an antiviral state. Viral ligand for CD209/DC-SIGN and CLEC4M/DC-SIGNR, which are respectively found on dendritic cells (DCs), and on liver sinusoidal endothelial cells and macrophage-like cells of lymph node sinuses. These interactions allow the capture of circulating HCV particles by these cells and subsequent facilitated transmission to permissive cells such as hepatocytes and lymphocyte subpopulations. The interaction between E2 and host amino acid transporter complex formed by SLC3A2 and SLC7A5/LAT1 may facilitate viral entry into host cell. Its function is as follows. Ion channel protein that acts as a viroporin and plays an essential role in the assembly, envelopment and secretion of viral particles. Regulates the host cell secretory pathway, which induces the intracellular retention of viral glycoproteins and favors assembly of viral particles. Creates a pore in acidic organelles and releases Ca(2+) and H(+) in the cytoplasm of infected cells, leading to a productive viral infection. High levels of cytoplasmic Ca(2+) may trigger membrane trafficking and transport of viral ER-associated proteins to viroplasms, sites of viral genome replication. This ionic imbalance induces the assembly of the inflammasome complex, which triggers the maturation of pro-IL-1beta into IL-1beta through the action of caspase-1. Targets also host mitochondria and induces mitochondrial depolarization. In addition of its role as a viroporin, acts as a lipid raft adhesion factor. Cysteine protease required for the proteolytic auto-cleavage between the non-structural proteins NS2 and NS3. The N-terminus of NS3 is required for the function of NS2 protease (active region NS2-3). Promotes the initiation of viral particle assembly by mediating the interaction between structural and non-structural proteins. In terms of biological role, displays three enzymatic activities: serine protease with a chymotrypsin-like fold, NTPase and RNA helicase. NS3 serine protease, in association with NS4A, is responsible for the cleavages of NS3-NS4A, NS4A-NS4B, NS4B-NS5A and NS5A-NS5B. The NS3/NS4A complex prevents phosphorylation of host IRF3, thus preventing the establishment of dsRNA induced antiviral state. The NS3/NS4A complex induces host amino acid transporter component SLC3A2, thus contributing to HCV propagation. NS3 RNA helicase binds to RNA and unwinds both dsDNA and dsRNA in the 3' to 5' direction, and likely resolves RNA complicated stable secondary structures in the template strand. Binds a single ATP and catalyzes the unzipping of a single base pair of dsRNA. Inhibits host antiviral proteins TBK1 and IRF3 thereby preventing the establishment of an antiviral state. Cleaves host MAVS/CARDIF thereby preventing the establishment of an antiviral state. Cleaves host TICAM1/TRIF, thereby disrupting TLR3 signaling and preventing the establishment of an antiviral state. Functionally, induces a specific membrane alteration that serves as a scaffold for the virus replication complex. This membrane alteration gives rise to the so-called ER-derived membranous web that contains the replication complex. NS4B self-interaction contributes to its function in membranous web formation. Promotes host TRIF protein degradation in a CASP8-dependent manner thereby inhibiting host TLR3-mediated interferon signaling. Disrupts the interaction between STING and TBK1 contributing to the inhibition of interferon signaling. Its function is as follows. Phosphorylated protein that is indispensable for viral replication and assembly. Both hypo- and hyperphosphorylated states are required for the viral life cycle. The hyperphosphorylated form of NS5A is an inhibitor of viral replication. Involved in RNA-binding and especially in binding to the viral genome. Zinc is essential for RNA-binding. Participates in the viral particle production as a result of its interaction with the mature viral core protein. Its interaction with host VAPB may target the viral replication complex to vesicles. Down-regulates viral IRES translation initiation. Mediates interferon resistance, presumably by interacting with and inhibiting host EIF2AK2/PKR. Prevents BIN1-induced apoptosis. Acts as a transcriptional activator of some host genes important for viral replication when localized in the nucleus. Via the interaction with host PACSIN2, modulates lipid droplet formation in order to promote virion assembly. Modulates TNFRSF21/DR6 signaling pathway for viral propagation. RNA-dependent RNA polymerase that performs primer-template recognition and RNA synthesis during viral replication. Initiates RNA transcription/replication at a flavin adenine dinucleotide (FAD), resulting in a 5'- FAD cap on viral RNAs. In this way, recognition of viral 5' RNA by host pattern recognition receptors can be bypassed, thereby evading activation of antiviral pathways. The sequence is that of Genome polyprotein from Hepatitis C virus genotype 1b (isolate HC-J1) (HCV).